Consider the following 174-residue polypeptide: MTTIRRFSCNDLLRFTSVNLDHLTETFNMSFYMTYLARWPDYFHVAEGPGNRVMGYIMGKVEGQGESWHGHVTAVTVSPEYRRQQLAKKLMNLLEDISDKIDKAYFVDLFVRASNTPAIKMYEKLGYIIYRRVLRYYSGEEDGLDMRKALSRDVEKKSVIPLKRPITPDELEYD.

Residues 2–151 (TTIRRFSCND…DGLDMRKALS (150 aa)) enclose the N-acetyltransferase domain.

The protein belongs to the acetyltransferase family. ARD1 subfamily.

It carries out the reaction N-terminal L-methionyl-L-asparaginyl-[protein] + acetyl-CoA = N-terminal N(alpha)-acetyl-L-methionyl-L-asparaginyl-[protein] + CoA + H(+). It catalyses the reaction N-terminal L-methionyl-L-glutaminyl-[protein] + acetyl-CoA = N-terminal N(alpha)-acetyl-L-methionyl-L-glutaminyl-[protein] + CoA + H(+). The enzyme catalyses N-terminal L-methionyl-L-aspartyl-[protein] + acetyl-CoA = N-terminal N(alpha)-acetyl-L-methionyl-L-aspartyl-[protein] + CoA + H(+). The catalysed reaction is N-terminal L-methionyl-L-glutamyl-[protein] + acetyl-CoA = N-terminal N(alpha)-acetyl-L-methionyl-L-glutamyl-[protein] + CoA + H(+). Functionally, catalytic subunit of the NatB N-alpha-acetyltransferase complex. Involved in plant immunity through the regulation of SNC1 stability. This Arabidopsis thaliana (Mouse-ear cress) protein is N-terminal acetyltransferase B complex catalytic subunit NAA20.